Here is a 123-residue protein sequence, read N- to C-terminus: uncharacterized protein (123 aa).

The tract at residues 1–24 (MGGGGPPARVQGTEGSQTGGGAVA) is disordered.

This is an uncharacterized protein from Halorubrum pleomorphic virus 1 (HRPV-1).